Consider the following 936-residue polypeptide: ABC transporter A family member 5 (936 aa).

The next 7 helical transmembrane spans lie at 34-54 (LIVI…LFDT), 340-360 (ASLI…PVML), 393-413 (FLAI…AIGL), 422-442 (SIQF…AFLV), 454-474 (VAAY…FQFL), 484-501 (WIYI…RGLY), and 527-547 (AMEE…IAAY). Residues 614-851 (IVCDNLKKVY…YGGSYVLTMT (238 aa)) enclose the ABC transporter domain. ATP is bound at residue 652–659 (GPNGAGKT).

It belongs to the ABC transporter superfamily. ABCA family. CPR flippase (TC 3.A.1.211) subfamily.

It is found in the membrane. The polypeptide is ABC transporter A family member 5 (ABCA5) (Arabidopsis thaliana (Mouse-ear cress)).